We begin with the raw amino-acid sequence, 466 residues long: Aladin (466 aa).

5 WD repeats span residues 135-174 (WLNS…TTAT), 179-218 (PSQT…HLGR), 229-269 (PNNL…MQPL), 271-310 (RLGP…TTER), and 378-418 (LVGG…FDLQ).

It is found in the nucleus. Its subcellular location is the nuclear pore complex. The protein localises to the cytoplasm. It localises to the cytoskeleton. The protein resides in the spindle. Its function is as follows. Involved in mitotic spindle assembly. The chain is Aladin from Drosophila melanogaster (Fruit fly).